A 205-amino-acid polypeptide reads, in one-letter code: MIKYSNLVIPKTKSILKSGCNNNIGYGDRYFFNKLFGSNDASDTHNQPTTKIVTKEMTKELKYPVNQVYSVIIKVEDYKEFLPFCLNSTILKREKDKNHFEAELEVGQGTIKESYVSKVVYKENKFIESTATDTPLFHKLINTWSFKQGQTPNTTIAHCKLIYQFKSPFYATLMENFFASSLDVMINSFDKRCDELYGSSNSFKK.

It belongs to the COQ10 family. As to quaternary structure, interacts with coenzyme Q.

Its subcellular location is the mitochondrion inner membrane. Required for the function of coenzyme Q in the respiratory chain. May serve as a chaperone or may be involved in the transport of Q6 from its site of synthesis to the catalytic sites of the respiratory complexes. This is Coenzyme Q-binding protein COQ10, mitochondrial (coq10-1) from Dictyostelium discoideum (Social amoeba).